A 423-amino-acid polypeptide reads, in one-letter code: Mannose-6-phosphate isomerase (423 aa).

Alanine 2 carries the N-acetylalanine modification. Phosphoserine occurs at positions 102 and 108. Residues glutamine 110, histidine 112, glutamate 137, and histidine 276 each contribute to the Zn(2+) site. Arginine 295 is a catalytic residue.

Belongs to the mannose-6-phosphate isomerase type 1 family. It depends on Zn(2+) as a cofactor.

It is found in the cytoplasm. It catalyses the reaction D-mannose 6-phosphate = D-fructose 6-phosphate. The protein operates within nucleotide-sugar biosynthesis; GDP-alpha-D-mannose biosynthesis; alpha-D-mannose 1-phosphate from D-fructose 6-phosphate: step 1/2. In terms of biological role, isomerase that catalyzes the interconversion of fructose-6-P and mannose-6-P and has a critical role in the supply of D-mannose derivatives required for many eukaryotic glycosylation reactions. The polypeptide is Mannose-6-phosphate isomerase (MPI) (Macaca fascicularis (Crab-eating macaque)).